Here is a 327-residue protein sequence, read N- to C-terminus: PDZ and LIM domain protein 1 (327 aa).

An N-acetylthreonine modification is found at Thr2. A PDZ domain is found at Thr3 to Glu85. Phosphoserine is present on residues Ser90 and Ser130. Tyr142 is subject to Phosphotyrosine. A disordered region spans residues Val161–Gly184. One can recognise an LIM zinc-binding domain in the interval Pro256–Pro315. Zn(2+)-binding residues include Cys258, Cys261, His278, Cys281, Cys284, Cys287, Cys305, and His308. Thr314 is modified (phosphothreonine). At Tyr319 the chain carries Phosphotyrosine.

Interacts with ACTN1, ACTN2 and ACTN4. Interacts with PDLIM4. Expressed in heart, lung, spleen, testis and skeletal muscle.

The protein localises to the cytoplasm. It is found in the cytoskeleton. It localises to the myofibril. The protein resides in the sarcomere. Its subcellular location is the z line. Cytoskeletal protein that may act as an adapter that brings other proteins (like kinases) to the cytoskeleton. Involved in assembly, disassembly and directioning of stress fibers in fibroblasts. Required for the localization of ACTN1 and PALLD to stress fibers. Required for cell migration and in maintaining cell polarity of fibroblasts. This Mus musculus (Mouse) protein is PDZ and LIM domain protein 1 (Pdlim1).